Here is a 251-residue protein sequence, read N- to C-terminus: Flap endonuclease Xni (251 aa).

D104 is a Mg(2+) binding site. Positions 160–249 constitute a 5'-3' exonuclease domain; it reads VQPQQLPDYW…IDGNLQQLRL (90 aa). K(+)-binding residues include L171, A172, P180, V182, and I185. The interaction with DNA stretch occupies residues 184–189; it reads GIGPKS.

It belongs to the Xni family. Mg(2+) is required as a cofactor. Requires K(+) as cofactor.

Has flap endonuclease activity. During DNA replication, flap endonucleases cleave the 5'-overhanging flap structure that is generated by displacement synthesis when DNA polymerase encounters the 5'-end of a downstream Okazaki fragment. This is Flap endonuclease Xni from Shigella flexneri serotype 5b (strain 8401).